The chain runs to 581 residues: Moesin/ezrin/radixin homolog 1 (581 aa).

Residues 8–298 (MNVRVTTMDA…GNHELYMRRR (291 aa)) enclose the FERM domain. The tract at residues 452 to 519 (QVAKGSRAAA…EERRTLAERN (68 aa)) is disordered. Residues 459 to 469 (AAAALQAATTT) are compositionally biased toward low complexity. Residues 477–486 (EEEENEEELI) are compositionally biased toward acidic residues. Residues 495 to 519 (FSKDFDTDEHIKDPVEERRTLAERN) are compositionally biased toward basic and acidic residues. A Phosphothreonine modification is found at Thr-562.

In terms of assembly, interacts with cytoskeletal actin.

The protein localises to the cell junction. The protein resides in the adherens junction. Its subcellular location is the cell projection. It localises to the microvillus. It is found in the rhabdomere. The protein localises to the cell membrane. The protein resides in the cytoplasm. Its subcellular location is the cytoskeleton. Functionally, involved in connections of major cytoskeletal structures to the plasma membrane. The protein is Moesin/ezrin/radixin homolog 1 of Anopheles gambiae (African malaria mosquito).